Here is a 516-residue protein sequence, read N- to C-terminus: Polyprenol-phosphate-mannose--protein mannosyltransferase (516 aa).

9 helical membrane passes run 113-133 (YNGLGWRFSGAVCGVIIVMLV), 143-163 (STLVGAIAGLLIIADGVSFVS), 166-186 (TALLDVFLVMFAVAAFACLMV), 234-254 (WSGLYFVLFFGVMTLVFDAIA), 275-295 (AAYVFGLIPFAVYLASYAPWF), 384-404 (VMLVGTPAMWFIAVPVLGWAL), 413-433 (WRYGAVLVGYMAGFLPWFADI), 437-457 (MYFFYATVMAPFLVLAIALIL), and 473-493 (LGLLTVCFYVALVITNFAWMY).

This sequence belongs to the glycosyltransferase 39 family.

Its subcellular location is the cell membrane. It functions in the pathway protein modification; protein glycosylation. In terms of biological role, protein O-mannosyltransferase that catalyzes the transfer of a single mannose residue from a polyprenol phospho-mannosyl lipidic donor to the hydroxyl group of selected serine and threonine residues in acceptor proteins. The sequence is that of Polyprenol-phosphate-mannose--protein mannosyltransferase from Mycolicibacterium smegmatis (strain ATCC 700084 / mc(2)155) (Mycobacterium smegmatis).